The following is a 480-amino-acid chain: Argininosuccinate lyase (480 aa).

It belongs to the lyase 1 family. Argininosuccinate lyase subfamily.

Its subcellular location is the cytoplasm. The enzyme catalyses 2-(N(omega)-L-arginino)succinate = fumarate + L-arginine. Its pathway is amino-acid biosynthesis; L-arginine biosynthesis; L-arginine from L-ornithine and carbamoyl phosphate: step 3/3. The chain is Argininosuccinate lyase from Ruthia magnifica subsp. Calyptogena magnifica.